Reading from the N-terminus, the 191-residue chain is GDP-mannose pyrophosphatase (191 aa).

Residues Y17, 38 to 40, R67, and 85 to 87 contribute to the GDP-alpha-D-mannose site; these read KRE and AGL. The 138-residue stretch at 43 to 180 folds into the Nudix hydrolase domain; sequence DRGNGATILL…EIRDGKTVLL (138 aa). 3 residues coordinate Mg(2+): A85, E100, and E104. The Nudix box motif lies at 86–106; the sequence is GLLDNDEPEVCIRKEAIEETG. GDP-alpha-D-mannose is bound by residues E104, E127, 150–151, and K176; that span reads DE. Mg(2+) is bound at residue E151.

The protein belongs to the Nudix hydrolase family. NudK subfamily. As to quaternary structure, homodimer. Requires Mg(2+) as cofactor.

It carries out the reaction GDP-alpha-D-mannose + H2O = alpha-D-mannose 1-phosphate + GMP + 2 H(+). In terms of biological role, nucleoside diphosphate sugar hydrolase that hydrolyzes GDP-mannose as its preferred substrate, yielding GMP and mannose-1-phosphate. This is GDP-mannose pyrophosphatase (nudK) from Shigella dysenteriae serotype 1 (strain Sd197).